Reading from the N-terminus, the 185-residue chain is Ribosome maturation factor RimM (185 aa).

Positions 92-168 constitute a PRC barrel domain; the sequence is DDDTFYHADL…GRRVVVAEAF (77 aa).

The protein belongs to the RimM family. As to quaternary structure, binds ribosomal protein uS19.

The protein resides in the cytoplasm. Its function is as follows. An accessory protein needed during the final step in the assembly of 30S ribosomal subunit, possibly for assembly of the head region. Essential for efficient processing of 16S rRNA. May be needed both before and after RbfA during the maturation of 16S rRNA. It has affinity for free ribosomal 30S subunits but not for 70S ribosomes. This chain is Ribosome maturation factor RimM, found in Xanthobacter autotrophicus (strain ATCC BAA-1158 / Py2).